Reading from the N-terminus, the 95-residue chain is Translation initiation factor 1A (95 aa).

Residues 6-80 (SRKNLRMPEE…EKADITWRYE (75 aa)) form the S1-like domain.

It belongs to the eIF-1A family.

Seems to be required for maximal rate of protein biosynthesis. Enhances ribosome dissociation into subunits and stabilizes the binding of the initiator Met-tRNA(I) to 40 S ribosomal subunits. The sequence is that of Translation initiation factor 1A from Haloarcula marismortui (strain ATCC 43049 / DSM 3752 / JCM 8966 / VKM B-1809) (Halobacterium marismortui).